The sequence spans 126 residues: DNA-directed RNA polymerase subunit omega (126 aa).

The protein belongs to the RNA polymerase subunit omega family. In terms of assembly, the RNAP catalytic core consists of 2 alpha, 1 beta, 1 beta' and 1 omega subunit. When a sigma factor is associated with the core the holoenzyme is formed, which can initiate transcription.

It carries out the reaction RNA(n) + a ribonucleoside 5'-triphosphate = RNA(n+1) + diphosphate. Its function is as follows. Promotes RNA polymerase assembly. Latches the N- and C-terminal regions of the beta' subunit thereby facilitating its interaction with the beta and alpha subunits. This is DNA-directed RNA polymerase subunit omega from Rickettsia bellii (strain OSU 85-389).